The primary structure comprises 182 residues: Glutathione-regulated potassium-efflux system ancillary protein KefG (182 aa).

This sequence belongs to the NAD(P)H dehydrogenase (quinone) family. KefG subfamily. In terms of assembly, interacts with KefB.

The protein localises to the cell inner membrane. The enzyme catalyses a quinone + NADH + H(+) = a quinol + NAD(+). The catalysed reaction is a quinone + NADPH + H(+) = a quinol + NADP(+). Its function is as follows. Regulatory subunit of a potassium efflux system that confers protection against electrophiles. Required for full activity of KefB. The sequence is that of Glutathione-regulated potassium-efflux system ancillary protein KefG from Yersinia pseudotuberculosis serotype O:1b (strain IP 31758).